The sequence spans 214 residues: 3,4-dihydroxy-2-butanone 4-phosphate synthase (214 aa).

D-ribulose 5-phosphate is bound by residues 37–38 (RE), Asp-42, 150–154 (RPGHT), and Glu-174. Glu-38 is a binding site for Mg(2+). Mg(2+) is bound at residue His-153.

The protein belongs to the DHBP synthase family. Homodimer. Mg(2+) serves as cofactor. Requires Mn(2+) as cofactor.

The catalysed reaction is D-ribulose 5-phosphate = (2S)-2-hydroxy-3-oxobutyl phosphate + formate + H(+). Its pathway is cofactor biosynthesis; riboflavin biosynthesis; 2-hydroxy-3-oxobutyl phosphate from D-ribulose 5-phosphate: step 1/1. In terms of biological role, catalyzes the conversion of D-ribulose 5-phosphate to formate and 3,4-dihydroxy-2-butanone 4-phosphate. The polypeptide is 3,4-dihydroxy-2-butanone 4-phosphate synthase (Mannheimia succiniciproducens (strain KCTC 0769BP / MBEL55E)).